The following is a 439-amino-acid chain: tRNA-2-methylthio-N(6)-dimethylallyladenosine synthase (439 aa).

The region spanning 2–116 (LKVYIETMGC…ISQVIHKEKA (115 aa)) is the MTTase N-terminal domain. Positions 11, 47, 79, 149, 153, and 156 each coordinate [4Fe-4S] cluster. The region spanning 135–368 (KKAEVRSLLN…QNRHKEILEE (234 aa)) is the Radical SAM core domain. A TRAM domain is found at 371–437 (RLEVGKTHVV…KGRLMATTKN (67 aa)).

It belongs to the methylthiotransferase family. MiaB subfamily. As to quaternary structure, monomer. [4Fe-4S] cluster is required as a cofactor.

The protein localises to the cytoplasm. The catalysed reaction is N(6)-dimethylallyladenosine(37) in tRNA + (sulfur carrier)-SH + AH2 + 2 S-adenosyl-L-methionine = 2-methylsulfanyl-N(6)-dimethylallyladenosine(37) in tRNA + (sulfur carrier)-H + 5'-deoxyadenosine + L-methionine + A + S-adenosyl-L-homocysteine + 2 H(+). Functionally, catalyzes the methylthiolation of N6-(dimethylallyl)adenosine (i(6)A), leading to the formation of 2-methylthio-N6-(dimethylallyl)adenosine (ms(2)i(6)A) at position 37 in tRNAs that read codons beginning with uridine. This chain is tRNA-2-methylthio-N(6)-dimethylallyladenosine synthase, found in Helicobacter acinonychis (strain Sheeba).